We begin with the raw amino-acid sequence, 271 residues long: Mitochondrial distribution and morphology protein 12 (271 aa).

The SMP-LTD domain occupies 1–267 (MSFDINWSTL…WPSWINLDFN (267 aa)). A Glycyl lysine isopeptide (Lys-Gly) (interchain with G-Cter in ubiquitin) cross-link involves residue lysine 49.

It belongs to the MDM12 family. In terms of assembly, component of the ER-mitochondria encounter structure (ERMES) or MDM complex, composed of MMM1, MDM10, MDM12 and MDM34. An MMM1 homodimer associates with one molecule of MDM12 on each side in a pairwise head-to-tail manner, and the SMP-LTD domains of MMM1 and MDM12 generate a continuous hydrophobic tunnel for phospholipid trafficking. Interacts with PUF3.

The protein resides in the mitochondrion outer membrane. Its subcellular location is the endoplasmic reticulum membrane. Component of the ERMES/MDM complex, which serves as a molecular tether to connect the endoplasmic reticulum (ER) and mitochondria. Components of this complex are involved in the control of mitochondrial shape and protein biogenesis, and function in nonvesicular lipid trafficking between the ER and mitochondria. MDM12 is required for the interaction of the ER-resident membrane protein MMM1 and the outer mitochondrial membrane-resident beta-barrel protein MDM10. The MDM12-MMM1 subcomplex functions in the major beta-barrel assembly pathway that is responsible for biogenesis of all mitochondrial outer membrane beta-barrel proteins, and acts in a late step after the SAM complex. The MDM10-MDM12-MMM1 subcomplex further acts in the TOM40-specific pathway after the action of the MDM12-MMM1 complex. Essential for establishing and maintaining the structure of mitochondria and maintenance of mtDNA nucleoids. The chain is Mitochondrial distribution and morphology protein 12 from Saccharomyces cerevisiae (strain AWRI1631) (Baker's yeast).